Reading from the N-terminus, the 1480-residue chain is DNA polymerase zeta catalytic subunit (1480 aa).

Residues 403 to 488 (DRSKFPKSPL…GDTRKAGKRL (86 aa)) are disordered. Polar residues predominate over residues 411–427 (PLNSSQEVTIHSSQDRQ). Residues 457–468 (TKREIEFCRDLP) are compositionally biased toward basic and acidic residues. Residues 470 to 479 (RPTSSEPNQG) are compositionally biased toward polar residues. Zn(2+)-binding residues include cysteine 1381, cysteine 1384, cysteine 1400, and cysteine 1403. A CysA-type zinc finger spans residues 1381 to 1403 (CSSCLKNNIEIIPDKINSLCSDC). The [4Fe-4S] cluster site is built by cysteine 1432, cysteine 1435, cysteine 1446, and cysteine 1451. The CysB motif signature appears at 1432–1451 (CRGCSKLSSSDPVLCKSNSC).

Belongs to the DNA polymerase type-B family. In terms of assembly, forms DNA polymerase zeta with rev7. [4Fe-4S] cluster is required as a cofactor.

Its subcellular location is the mitochondrion. It is found in the nucleus. The catalysed reaction is DNA(n) + a 2'-deoxyribonucleoside 5'-triphosphate = DNA(n+1) + diphosphate. Nonessential DNA polymerase. Required for DNA damage induced mutagenesis. Involved in DNA repair, mitochondrial DNA repair and translesion synthesis. Has a role in the bypass of abasic (AP) sites. This is DNA polymerase zeta catalytic subunit (rev3) from Schizosaccharomyces pombe (strain 972 / ATCC 24843) (Fission yeast).